Here is a 1448-residue protein sequence, read N- to C-terminus: Gag-Pol polyprotein (1448 aa).

Gly2 carries N-myristoyl glycine; by host lipidation. Residues 16 to 22 (WEKIYLR) carry the Nuclear export signal motif. The Nuclear localization signal signature appears at 26-32 (KKKYMMK). Residues 107–116 (KMKAEQKEPE) are compositionally biased toward basic and acidic residues. Residues 107–129 (KMKAEQKEPEPEQAAGAAAAPES) are disordered. A compositionally biased stretch (low complexity) spans 118–128 (EQAAGAAAAPE). Phosphotyrosine; by host is present on Tyr135. 2 consecutive CCHC-type zinc fingers follow at residues 393-410 (IKCF…NCKA) and 414-431 (KGCW…DCRS). Composition is skewed to basic and acidic residues over residues 446–460 (REAR…KERA) and 473–490 (GEDH…DREL). The tract at residues 446 to 490 (REARKFPPDNNKERANSPSNRELWVSGGEDHTGDREGRKGEDREL) is disordered. Residues 517–586 (KEALLDTGAD…TPVNIIGRNF (70 aa)) form the Peptidase A2 domain. Asp522 (for protease activity; shared with dimeric partner) is an active-site residue. One can recognise a Reverse transcriptase domain in the interval 640 to 830 (EGKISRIGPE…PPFLWMGYEL (191 aa)). Residues Asp706, Asp781, and Asp782 each coordinate Mg(2+). The tract at residues 823-831 (FLWMGYELH) is RT 'primer grip'. The Tryptophan repeat motif signature appears at 994–1010 (WETWWTEYWQATWIPDW). The region spanning 1030 to 1153 (ISGAETYYVD…IDKLVSTGIR (124 aa)) is the RNase H type-1 domain. Positions 1039, 1074, 1094, and 1145 each coordinate Mg(2+). The Integrase-type zinc finger occupies 1159–1200 (DGIDKAQEEHERYHSNWKAMASDFNLPPIVAKEIVASCDKCQ). The Zn(2+) site is built by His1168, His1172, Cys1196, and Cys1199. The region spanning 1210–1360 (INCSPGVWQL…TAGERIIDII (151 aa)) is the Integrase catalytic domain. Mg(2+) is bound by residues Asp1220 and Asp1272. Positions 1379-1426 (FRVYYRDSREPTWKGPAKLLWKGEGAVVIQDNGDIKVVPRRKAKIIRD) form a DNA-binding region, integrase-type.

Homotrimer. Interacts with gp41 (via C-terminus). As to quaternary structure, homodimer. The active site consists of two apposed aspartic acid residues. In terms of assembly, heterodimer of p66 RT and p51 RT (RT p66/p51). Heterodimerization of RT is essential for DNA polymerase activity. Despite the sequence identities, p66 RT and p51 RT have distinct folding. Homotetramer; may further associate as a homohexadecamer. Mg(2+) is required as a cofactor. Post-translationally, specific enzymatic cleavages by the viral protease yield mature proteins. The protease is released by autocatalytic cleavage. The polyprotein is cleaved during and after budding, this process is termed maturation. Proteolytic cleavage of p66 RT removes the RNase H domain to yield the p51 RT subunit. In terms of processing, capsid protein p24 is phosphorylated.

The protein localises to the virion. It localises to the host nucleus. The protein resides in the host cytoplasm. Its subcellular location is the host cell membrane. It carries out the reaction Specific for a P1 residue that is hydrophobic, and P1' variable, but often Pro.. The catalysed reaction is Endohydrolysis of RNA in RNA/DNA hybrids. Three different cleavage modes: 1. sequence-specific internal cleavage of RNA. Human immunodeficiency virus type 1 and Moloney murine leukemia virus enzymes prefer to cleave the RNA strand one nucleotide away from the RNA-DNA junction. 2. RNA 5'-end directed cleavage 13-19 nucleotides from the RNA end. 3. DNA 3'-end directed cleavage 15-20 nucleotides away from the primer terminus.. It catalyses the reaction 3'-end directed exonucleolytic cleavage of viral RNA-DNA hybrid.. The enzyme catalyses DNA(n) + a 2'-deoxyribonucleoside 5'-triphosphate = DNA(n+1) + diphosphate. Its activity is regulated as follows. The viral protease is inhibited by many synthetic protease inhibitors (PIs), such as amprenavir, atazanavir, indinavir, loprinavir, nelfinavir, ritonavir and saquinavir. RT can be inhibited either by nucleoside RT inhibitors (NRTIs) or by non nucleoside RT inhibitors (NNRTIs). NRTIs act as chain terminators, whereas NNRTIs inhibit DNA polymerization by binding a small hydrophobic pocket near the RT active site and inducing an allosteric change in this region. Classical NRTIs are abacavir, adefovir (PMEA), didanosine (ddI), lamivudine (3TC), stavudine (d4T), tenofovir (PMPA), zalcitabine (ddC), and zidovudine (AZT). Classical NNRTIs are atevirdine (BHAP U-87201E), delavirdine, efavirenz (DMP-266), emivirine (I-EBU), and nevirapine (BI-RG-587). The tritherapies used as a basic effective treatment of AIDS associate two NRTIs and one NNRTI. Use of protease inhibitors in tritherapy regimens permit more ambitious therapeutic strategies. Its function is as follows. Gag-Pol polyprotein and Gag polyprotein may regulate their own translation, by the binding genomic RNA in the 5'-UTR. At low concentration, Gag-Pol and Gag would promote translation, whereas at high concentration, the polyproteins encapsidate genomic RNA and then shut off translation. Matrix protein p17 has two main functions: in infected cell, it targets Gag and Gag-pol polyproteins to the plasma membrane via a multipartite membrane-binding signal, that includes its myristointegration complex. The myristoylation signal and the NLS exert conflicting influences its subcellular localization. The key regulation of these motifs might be phosphorylation of a portion of MA molecules on the C-terminal tyrosine at the time of virus maturation, by virion-associated cellular tyrosine kinase. Implicated in the release from host cell mediated by Vpu. In terms of biological role, capsid protein p24 forms the conical core that encapsulates the genomic RNA-nucleocapsid complex in the virion. The core is constituted by capsid protein hexamer subunits. The core is disassembled soon after virion entry. Interaction with host PPIA/CYPA protects the virus from restriction by host TRIM5-alpha and from an unknown antiviral activity in host cells. This capsid restriction by TRIM5 is one of the factors which restricts SIV to the simian species. Functionally, nucleocapsid protein p7 encapsulates and protects viral dimeric unspliced (genomic) RNA. Binds these RNAs through its zinc fingers. Facilitates rearangement of nucleic acid secondary structure during retrotranscription of genomic RNA. This capability is referred to as nucleic acid chaperone activity. Its function is as follows. The aspartyl protease mediates proteolytic cleavages of Gag and Gag-Pol polyproteins during or shortly after the release of the virion from the plasma membrane. Cleavages take place as an ordered, step-wise cascade to yield mature proteins. This process is called maturation. Displays maximal activity during the budding process just prior to particle release from the cell. Also cleaves Nef and Vif, probably concomitantly with viral structural proteins on maturation of virus particles. Hydrolyzes host EIF4GI and PABP1 in order to shut off the capped cellular mRNA translation. The resulting inhibition of cellular protein synthesis serves to ensure maximal viral gene expression and to evade host immune response. Reverse transcriptase/ribonuclease H (RT) is a multifunctional enzyme that converts the viral dimeric RNA genome into dsDNA in the cytoplasm, shortly after virus entry into the cell. This enzyme displays a DNA polymerase activity that can copy either DNA or RNA templates, and a ribonuclease H (RNase H) activity that cleaves the RNA strand of RNA-DNA heteroduplexes in a partially processive 3' to 5' endonucleasic mode. Conversion of viral genomic RNA into dsDNA requires many steps. A tRNA binds to the primer-binding site (PBS) situated at the 5'-end of the viral RNA. RT uses the 3' end of the tRNA primer to perform a short round of RNA-dependent minus-strand DNA synthesis. The reading proceeds through the U5 region and ends after the repeated (R) region which is present at both ends of viral RNA. The portion of the RNA-DNA heteroduplex is digested by the RNase H, resulting in a ssDNA product attached to the tRNA primer. This ssDNA/tRNA hybridizes with the identical R region situated at the 3' end of viral RNA. This template exchange, known as minus-strand DNA strong stop transfer, can be either intra- or intermolecular. RT uses the 3' end of this newly synthesized short ssDNA to perform the RNA-dependent minus-strand DNA synthesis of the whole template. RNase H digests the RNA template except for two polypurine tracts (PPTs) situated at the 5'-end and near the center of the genome. It is not clear if both polymerase and RNase H activities are simultaneous. RNase H can probably proceed both in a polymerase-dependent (RNA cut into small fragments by the same RT performing DNA synthesis) and a polymerase-independent mode (cleavage of remaining RNA fragments by free RTs). Secondly, RT performs DNA-directed plus-strand DNA synthesis using the PPTs that have not been removed by RNase H as primers. PPTs and tRNA primers are then removed by RNase H. The 3' and 5' ssDNA PBS regions hybridize to form a circular dsDNA intermediate. Strand displacement synthesis by RT to the PBS and PPT ends produces a blunt ended, linear dsDNA copy of the viral genome that includes long terminal repeats (LTRs) at both ends. In terms of biological role, integrase catalyzes viral DNA integration into the host chromosome, by performing a series of DNA cutting and joining reactions. This enzyme activity takes place after virion entry into a cell and reverse transcription of the RNA genome in dsDNA. The first step in the integration process is 3' processing. This step requires a complex comprising the viral genome, matrix protein, Vpr and integrase. This complex is called the pre-integration complex (PIC). The integrase protein removes 2 nucleotides from each 3' end of the viral DNA, leaving recessed CA OH's at the 3' ends. In the second step, the PIC enters cell nucleus. This process is mediated through integrase and Vpr proteins, and allows the virus to infect a non dividing cell. This ability to enter the nucleus is specific of lentiviruses, other retroviruses cannot and rely on cell division to access cell chromosomes. In the third step, termed strand transfer, the integrase protein joins the previously processed 3' ends to the 5' ends of strands of target cellular DNA at the site of integration. The 5'-ends are produced by integrase-catalyzed staggered cuts, 5 bp apart. A Y-shaped, gapped, recombination intermediate results, with the 5'-ends of the viral DNA strands and the 3' ends of target DNA strands remaining unjoined, flanking a gap of 5 bp. The last step is viral DNA integration into host chromosome. This involves host DNA repair synthesis in which the 5 bp gaps between the unjoined strands are filled in and then ligated. Since this process occurs at both cuts flanking the SIV genome, a 5 bp duplication of host DNA is produced at the ends of SIV integration. Alternatively, Integrase may catalyze the excision of viral DNA just after strand transfer, this is termed disintegration. The polypeptide is Gag-Pol polyprotein (gag-pol) (Pan troglodytes (Chimpanzee)).